A 336-amino-acid chain; its full sequence is MTEAQTACPTTETPVAAPVAPRWRVADVIALYELPFNDLLFRAQQTHREHFDANAIQLSTLLSIKTGGCEEDCGYCSQSAHHDTGLKAEKLMEVDAVLAAARTAKENGATRFCMGAAWRNPKDRHIEPIKEMIRGVKDMGLETCVTLGMLEEHQAKALAEAGLDYYNHNLDTSPEFYGQIISTRTYQDRLDTLERVRDAGINVCCGGIIGMGESRRERAGLIAQLANMNPYPESVPINNLVAIEGTPLENAQALDPFEFVRTIAVARITMPKAMVRLSAGREQLDDSMQALCFLAGANSMFYGDVLLTTGNPRAEADRKLLARLGMSATEATQLSA.

Residues 54–281 enclose the Radical SAM core domain; the sequence is NAIQLSTLLS…KAMVRLSAGR (228 aa). [4Fe-4S] cluster-binding residues include Cys69, Cys73, and Cys76. Residues Cys113, Cys144, Cys204, and Arg276 each contribute to the [2Fe-2S] cluster site.

This sequence belongs to the radical SAM superfamily. Biotin synthase family. As to quaternary structure, homodimer. The cofactor is [4Fe-4S] cluster. It depends on [2Fe-2S] cluster as a cofactor.

The enzyme catalyses (4R,5S)-dethiobiotin + (sulfur carrier)-SH + 2 reduced [2Fe-2S]-[ferredoxin] + 2 S-adenosyl-L-methionine = (sulfur carrier)-H + biotin + 2 5'-deoxyadenosine + 2 L-methionine + 2 oxidized [2Fe-2S]-[ferredoxin]. It participates in cofactor biosynthesis; biotin biosynthesis; biotin from 7,8-diaminononanoate: step 2/2. Catalyzes the conversion of dethiobiotin (DTB) to biotin by the insertion of a sulfur atom into dethiobiotin via a radical-based mechanism. This Burkholderia thailandensis (strain ATCC 700388 / DSM 13276 / CCUG 48851 / CIP 106301 / E264) protein is Biotin synthase.